The primary structure comprises 461 residues: MTTAKSGTTIEIIGAVVDVEFPRHAVPKVYDALQVDENNLTLEVQQQLGDGVVRTIAMGSTEGLKRDIAVKNTEKPIEVPVGKETLGRIMNVLGEPIDELGPINSKEKLPIHRPAPSFIEQSGATELLETGIKVVDLLCPFAKGGKVGLFGGAGVGKTVNMMELIRNIAIEHSGYSVFAGVGERTREGNDFYHEMKESNVLDKVALVYGQMNEPPGNRLRVGLTGLTLAEAFRDEGRDVLLFIDNIFRYTLAGVEVSALLGRMPSAVGYQPTLAEEMGALQERITSTKKGSITSIQAVYVPADDLTDPSPATTFAHLDATVVLSRQIAERGIYPAIDPLDSTSRQLDPLIIGEEHYRVARGVQETLQRYEELKDIIAILGMDELSEDDKRAVRRARKIQRFLSQPFFVAEVFTGAPGKYVSLQDTIRGFKGIINGEYDELPEQAFYMVGSIEEAVEKAKSL.

Residue 151 to 158 (GGAGVGKT) participates in ATP binding.

It belongs to the ATPase alpha/beta chains family. As to quaternary structure, F-type ATPases have 2 components, CF(1) - the catalytic core - and CF(0) - the membrane proton channel. CF(1) has five subunits: alpha(3), beta(3), gamma(1), delta(1), epsilon(1). CF(0) has three main subunits: a(1), b(2) and c(9-12). The alpha and beta chains form an alternating ring which encloses part of the gamma chain. CF(1) is attached to CF(0) by a central stalk formed by the gamma and epsilon chains, while a peripheral stalk is formed by the delta and b chains.

Its subcellular location is the cell inner membrane. The enzyme catalyses ATP + H2O + 4 H(+)(in) = ADP + phosphate + 5 H(+)(out). Its function is as follows. Produces ATP from ADP in the presence of a proton gradient across the membrane. The catalytic sites are hosted primarily by the beta subunits. The polypeptide is ATP synthase subunit beta (Coxiella burnetii (strain Dugway 5J108-111)).